A 75-amino-acid polypeptide reads, in one-letter code: UPF0352 protein YejL (75 aa).

Belongs to the UPF0352 family.

In Salmonella arizonae (strain ATCC BAA-731 / CDC346-86 / RSK2980), this protein is UPF0352 protein YejL.